The primary structure comprises 1007 residues: Probable beta-galactosidase A (1007 aa).

The signal sequence occupies residues Met-1–Gly-18. Residues Tyr-96, Asn-140, Ala-141, and Glu-142 each contribute to the substrate site. N-linked (GlcNAc...) asparagine glycosylation occurs at Asn-156. Position 199 (Asn-199) interacts with substrate. Catalysis depends on Glu-200, which acts as the Proton donor. A disulfide bridge connects residues Cys-205 and Cys-206. Position 260 (Tyr-260) interacts with substrate. The cysteines at positions 266 and 315 are disulfide-linked. The Nucleophile role is filled by Glu-298. Tyr-364 contacts substrate. Residues Asn-373, Asn-402, Asn-422, Asn-478, Asn-522, Asn-622, Asn-739, Asn-760, Asn-777, and Asn-805 are each glycosylated (N-linked (GlcNAc...) asparagine). The tract at residues Arg-862 to Leu-881 is disordered. N-linked (GlcNAc...) asparagine glycosylation occurs at Asn-914.

Belongs to the glycosyl hydrolase 35 family.

It is found in the secreted. The enzyme catalyses Hydrolysis of terminal non-reducing beta-D-galactose residues in beta-D-galactosides.. In terms of biological role, cleaves beta-linked terminal galactosyl residues from gangliosides, glycoproteins, and glycosaminoglycans. This chain is Probable beta-galactosidase A (lacA), found in Aspergillus phoenicis (Aspergillus saitoi).